A 272-amino-acid polypeptide reads, in one-letter code: Cell wall synthesis protein Wag31 (272 aa).

Disordered regions lie at residues 1 to 22 and 62 to 109; these read MPLTPADVHNVAFSKPPIGKRG and AARS…SEDT. A coiled-coil region spans residues 30–67; it reads AFLDLVENELTRLIEENADLRQRVAELDQELAAARSGA. 2 stretches are compositionally biased toward low complexity: residues 62-76 and 94-105; these read AARSGAGASSQATSS and VYEAPAQPAAPQ. Threonine 74 carries the post-translational modification Phosphothreonine. The stretch at 139–206 forms a coiled coil; sequence LSDARAQAEA…AERKHSEIMG (68 aa). Residues 243–272 form a disordered region; it reads ELGQRGSAAPVDSSANSDASGFGQFNRGNN.

It belongs to the DivIVA family. As to quaternary structure, forms homooligomers. Interacts with PbpB and CwsA. Phosphorylated by PknA.

It localises to the cytoplasm. Its function is as follows. Important for maintaining cell shape and cell wall integrity by localizing peptidoglycan synthesis to the cell poles. Protects PbpB (PBP3, FtsI) from oxidative stress-induced cleavage. This is Cell wall synthesis protein Wag31 (wag31) from Mycolicibacterium smegmatis (strain ATCC 700084 / mc(2)155) (Mycobacterium smegmatis).